Reading from the N-terminus, the 763-residue chain is Xaa-Pro dipeptidyl-peptidase (763 aa).

Residues serine 348, aspartate 468, and histidine 498 each act as charge relay system in the active site.

This sequence belongs to the peptidase S15 family. Homodimer.

Its subcellular location is the cytoplasm. It catalyses the reaction Hydrolyzes Xaa-Pro-|- bonds to release unblocked, N-terminal dipeptides from substrates including Ala-Pro-|-p-nitroanilide and (sequentially) Tyr-Pro-|-Phe-Pro-|-Gly-Pro-|-Ile.. Its function is as follows. Removes N-terminal dipeptides sequentially from polypeptides having unsubstituted N-termini provided that the penultimate residue is proline. In Lactococcus lactis subsp. cremoris (strain SK11), this protein is Xaa-Pro dipeptidyl-peptidase.